Here is a 483-residue protein sequence, read N- to C-terminus: Inositol-pentakisphosphate 2-kinase (483 aa).

Positions 140–144 match the EXKPK motif motif; sequence EIKPK. A disordered region spans residues 279-298; it reads SNRSGEPRKMHLSESKPHCE. Residues 281 to 297 show a composition bias toward basic and acidic residues; sequence RSGEPRKMHLSESKPHC.

This sequence belongs to the IPK1 type 2 family. Expressed both maternally and zygotically. Expressed in cleavage-stage embryos. Ubiquitously distributed throughout blastula stages of embryogenesis. At the onset of gastrulation, it is enriched in cells around the blastoderm margin. At shield stage, expression is detected in the deep involuted cells that contribute to mesendoderm. During mid and late gastrula stages, it is strongly expressed in axial mesendoderm. However, it is not present in the nascent tailbud at yolk plug closure (YPC) stage. Expression in axial mesendoderm is reduced at the 2 somite stage (SS). At 6 SS, it is expressed in cells surrounding Kupffer's vesicle, but apparently not within. By 10 SS, it is no longer detected as a specific signal above background.

The protein localises to the cytoplasm. The protein resides in the nucleus. It carries out the reaction 1D-myo-inositol 1,3,4,5,6-pentakisphosphate + ATP = 1D-myo-inositol hexakisphosphate + ADP + H(+). Functionally, phosphorylates Ins(1,3,4,5,6)P5 at position 2 to form Ins(1,2,3,4,5,6)P6 (InsP6 or phytate). InsP6 is involved in many processes such as mRNA export, non-homologous end-joining, endocytosis and ion channel regulation. InsP6 also acts as a key regulator of left-right asymmetry in embryo, probably by regulating asymmetric Ca(2+) during left-right specification. The protein is Inositol-pentakisphosphate 2-kinase (ippk) of Danio rerio (Zebrafish).